The following is a 179-amino-acid chain: Large ribosomal subunit protein uL5 (179 aa).

Belongs to the universal ribosomal protein uL5 family. As to quaternary structure, part of the 50S ribosomal subunit; part of the 5S rRNA/L5/L18/L25 subcomplex. Contacts the 5S rRNA and the P site tRNA. Forms a bridge to the 30S subunit in the 70S ribosome.

Its function is as follows. This is one of the proteins that bind and probably mediate the attachment of the 5S RNA into the large ribosomal subunit, where it forms part of the central protuberance. In the 70S ribosome it contacts protein S13 of the 30S subunit (bridge B1b), connecting the 2 subunits; this bridge is implicated in subunit movement. Contacts the P site tRNA; the 5S rRNA and some of its associated proteins might help stabilize positioning of ribosome-bound tRNAs. The polypeptide is Large ribosomal subunit protein uL5 (Alkaliphilus metalliredigens (strain QYMF)).